The primary structure comprises 280 residues: 2-C-methyl-D-erythritol 4-phosphate cytidylyltransferase (280 aa).

Belongs to the IspD/TarI cytidylyltransferase family. IspD subfamily.

The catalysed reaction is 2-C-methyl-D-erythritol 4-phosphate + CTP + H(+) = 4-CDP-2-C-methyl-D-erythritol + diphosphate. It functions in the pathway isoprenoid biosynthesis; isopentenyl diphosphate biosynthesis via DXP pathway; isopentenyl diphosphate from 1-deoxy-D-xylulose 5-phosphate: step 2/6. Its function is as follows. Catalyzes the formation of 4-diphosphocytidyl-2-C-methyl-D-erythritol from CTP and 2-C-methyl-D-erythritol 4-phosphate (MEP). This chain is 2-C-methyl-D-erythritol 4-phosphate cytidylyltransferase, found in Psychrobacter cryohalolentis (strain ATCC BAA-1226 / DSM 17306 / VKM B-2378 / K5).